The primary structure comprises 505 residues: NADH-quinone oxidoreductase subunit N (505 aa).

The next 14 helical transmembrane spans lie at 20 to 40, 59 to 79, 83 to 103, 115 to 135, 137 to 157, 172 to 192, 220 to 240, 251 to 271, 285 to 305, 314 to 334, 342 to 362, 394 to 414, 431 to 451, and 481 to 501; these read ALAPELVLLVTAVCLMLGDLF, ALALTLSMNFSGGATAFGGVF, GLAAAFKVVCLAALGLTALMS, GEYYSLMAFSTLGMCVMVSAG, AIVLYLGLELMALPIYALVAL, FLMGSFASALLLFGLSILYGL, AVVALGLVLAGLGFKVATVPF, APTTVTAFMSVAAKTASFAVL, LWSDALAGLAVLTMLLGNIAA, MLAYSAIAHAGYALLGLAACT, AAYLTIYLCMNIGAFAVIIYL, LAAVMLVFLFSLTGIPPTAGF, ITVVVAVVCSTISAWYYLGVA, and AVCLAGAVLWGIFPQSLLFWI.

The protein belongs to the complex I subunit 2 family. In terms of assembly, NDH-1 is composed of 14 different subunits. Subunits NuoA, H, J, K, L, M, N constitute the membrane sector of the complex.

The protein localises to the cell inner membrane. It carries out the reaction a quinone + NADH + 5 H(+)(in) = a quinol + NAD(+) + 4 H(+)(out). Functionally, NDH-1 shuttles electrons from NADH, via FMN and iron-sulfur (Fe-S) centers, to quinones in the respiratory chain. The immediate electron acceptor for the enzyme in this species is believed to be ubiquinone. Couples the redox reaction to proton translocation (for every two electrons transferred, four hydrogen ions are translocated across the cytoplasmic membrane), and thus conserves the redox energy in a proton gradient. This is NADH-quinone oxidoreductase subunit N from Desulfovibrio desulfuricans (strain ATCC 27774 / DSM 6949 / MB).